The chain runs to 148 residues: Ribonuclease P protein component (148 aa).

Positions 119–148 are disordered; it reads PLPAAPGTMPPARAPRPSSLSPTEPDPRSD.

Belongs to the RnpA family. As to quaternary structure, consists of a catalytic RNA component (M1 or rnpB) and a protein subunit.

It carries out the reaction Endonucleolytic cleavage of RNA, removing 5'-extranucleotides from tRNA precursor.. Its function is as follows. RNaseP catalyzes the removal of the 5'-leader sequence from pre-tRNA to produce the mature 5'-terminus. It can also cleave other RNA substrates such as 4.5S RNA. The protein component plays an auxiliary but essential role in vivo by binding to the 5'-leader sequence and broadening the substrate specificity of the ribozyme. The sequence is that of Ribonuclease P protein component from Xanthomonas campestris pv. campestris (strain 8004).